A 452-amino-acid polypeptide reads, in one-letter code: Trigger factor (452 aa).

A PPIase FKBP-type domain is found at G171 to T256.

Belongs to the FKBP-type PPIase family. Tig subfamily.

Its subcellular location is the cytoplasm. It catalyses the reaction [protein]-peptidylproline (omega=180) = [protein]-peptidylproline (omega=0). In terms of biological role, involved in protein export. Acts as a chaperone by maintaining the newly synthesized protein in an open conformation. Functions as a peptidyl-prolyl cis-trans isomerase. The polypeptide is Trigger factor (Rhodopseudomonas palustris (strain ATCC BAA-98 / CGA009)).